Reading from the N-terminus, the 409-residue chain is 5-aminolevulinate synthase (409 aa).

Succinyl-CoA-binding residues include Arg21, Ser137, and Lys156. Pyridoxal 5'-phosphate-binding residues include Ser189, His217, and Thr245. Residue Lys248 is part of the active site. At Lys248 the chain carries N6-(pyridoxal phosphate)lysine. Ser277 and Thr278 together coordinate pyridoxal 5'-phosphate. Residue Thr365 participates in succinyl-CoA binding.

It belongs to the class-II pyridoxal-phosphate-dependent aminotransferase family. In terms of assembly, homodimer. Pyridoxal 5'-phosphate serves as cofactor.

It carries out the reaction succinyl-CoA + glycine + H(+) = 5-aminolevulinate + CO2 + CoA. Its pathway is porphyrin-containing compound metabolism; protoporphyrin-IX biosynthesis; 5-aminolevulinate from glycine: step 1/1. The protein is 5-aminolevulinate synthase (hemA) of Rhodobacter capsulatus (strain ATCC BAA-309 / NBRC 16581 / SB1003).